The sequence spans 216 residues: Cytidylate kinase (216 aa).

9 to 17 (GPAASGKGT) contacts ATP.

Belongs to the cytidylate kinase family. Type 1 subfamily.

The protein resides in the cytoplasm. The catalysed reaction is CMP + ATP = CDP + ADP. It carries out the reaction dCMP + ATP = dCDP + ADP. In Caulobacter sp. (strain K31), this protein is Cytidylate kinase.